The chain runs to 65 residues: Conopeptide Vt3.2 (65 aa).

An N-terminal signal peptide occupies residues 1 to 12 (LLFPLATLQLNA). The propeptide occupies 13 to 48 (DQPVERNAENIQDLNPDKRFIFMPVPRRRGPYGSVH). Serine 64 is modified (serine amide).

The protein belongs to the conotoxin M superfamily. Homodimer; disulfide-linked. As to expression, expressed by the venom duct.

It localises to the secreted. The chain is Conopeptide Vt3.2 from Conus planorbis (Planorbis cone).